The primary structure comprises 643 residues: MHIHKLKKKIKKKKEGKYLTKKHILRKLFLNEEEFRKLCIFKGIYPKDFKEIPLKYRKKFYKHKVFYTRNDFLKLSHEKIINDFRKIKIYLKKYKKCKLTLEDFTRSKNIVANFPVYKLEHIIKERYPILSYAVDHLDDALSCIIAYSQLPSNHKYGIKNNMVKTCEMLKDHFHYYVYKTNRIKKAFISVKGYYLQAEILKKKVTWIIPHIFTPYLDTSIDFKLISDFIEYYIALLKFVLFKLYKLDNMLYPPKQDNDLKNEKLAHLSYDKDYSTNENNIDINMNQELQSKCNVNTNEDLNTCQEKTKEKNHKSDNNPHEHTTNIDNNNFNNIHLQDNCDLNKNEGKNLTNNIIHKNSEADNGHVHPDDHIDIDEHNKLKELFKNHIFYIHNDMPFDVLSIIILSCGGKISWNSRISPIHYDDNNITHEIYEKDKNTIHLNNPENEYKRIHIQPQYIFDCLNEKNILPCSDYLTEKENLPVHLSPFIEDENFKNLVKKEEYTINKMLNQKIKEEQYKDFSKENNNIFKSPNYKEEEEEENDDRETANLILNNKRQAALNNQLERENEDINQLKENDTILNKQTDQTQILKTQNLKSQEQEIQRHKIVLSKKKRKLFARIDMAQKRQKATIDKFMKKINKNKSK.

Residues 305–323 (EKTKEKNHKSDNNPHEHTT) are compositionally biased toward basic and acidic residues. Residues 305-329 (EKTKEKNHKSDNNPHEHTTNIDNNN) are disordered. The BRCT domain maps to 378–474 (KLKELFKNHI…NILPCSDYLT (97 aa)). Residues 531-615 (NYKEEEEEEN…IVLSKKKRKL (85 aa)) are a coiled coil.

Belongs to the pescadillo family. In terms of assembly, interacts with dual specificity protein phosphatase YVH1.

It is found in the nucleus. The protein resides in the nucleolus. The protein localises to the nucleoplasm. Required for maturation of ribosomal RNAs and formation of the large ribosomal subunit. In Plasmodium falciparum (isolate 3D7), this protein is Pescadillo homolog.